A 426-amino-acid chain; its full sequence is Gamma-glutamyl phosphate reductase (426 aa).

The protein belongs to the gamma-glutamyl phosphate reductase family.

It is found in the cytoplasm. It catalyses the reaction L-glutamate 5-semialdehyde + phosphate + NADP(+) = L-glutamyl 5-phosphate + NADPH + H(+). Its pathway is amino-acid biosynthesis; L-proline biosynthesis; L-glutamate 5-semialdehyde from L-glutamate: step 2/2. Functionally, catalyzes the NADPH-dependent reduction of L-glutamate 5-phosphate into L-glutamate 5-semialdehyde and phosphate. The product spontaneously undergoes cyclization to form 1-pyrroline-5-carboxylate. The chain is Gamma-glutamyl phosphate reductase from Cupriavidus metallidurans (strain ATCC 43123 / DSM 2839 / NBRC 102507 / CH34) (Ralstonia metallidurans).